The chain runs to 724 residues: Catalase-peroxidase (724 aa).

Residues 96 to 225 (WHAAGTYRVA…LAAVMMGLIY (130 aa)) constitute a cross-link (tryptophyl-tyrosyl-methioninium (Trp-Tyr) (with M-251)). Residue H97 is the Proton acceptor of the active site. The segment at residues 225-251 (YVNPEGVDGNPDPLRTAEDVRITFERM) is a cross-link (tryptophyl-tyrosyl-methioninium (Tyr-Met) (with W-96)). H266 provides a ligand contact to heme b.

This sequence belongs to the peroxidase family. Peroxidase/catalase subfamily. As to quaternary structure, homodimer or homotetramer. Requires heme b as cofactor. In terms of processing, formation of the three residue Trp-Tyr-Met cross-link is important for the catalase, but not the peroxidase activity of the enzyme.

It carries out the reaction H2O2 + AH2 = A + 2 H2O. The catalysed reaction is 2 H2O2 = O2 + 2 H2O. Bifunctional enzyme with both catalase and broad-spectrum peroxidase activity. This Halorhodospira halophila (strain DSM 244 / SL1) (Ectothiorhodospira halophila (strain DSM 244 / SL1)) protein is Catalase-peroxidase.